A 110-amino-acid chain; its full sequence is UPF0145 protein BLD_1357 (110 aa).

The protein belongs to the UPF0145 family.

This chain is UPF0145 protein BLD_1357, found in Bifidobacterium longum (strain DJO10A).